The chain runs to 180 residues: Peptidyl-tRNA hydrolase (180 aa).

Residue Tyr-13 participates in tRNA binding. The active-site Proton acceptor is the His-18. Residues Tyr-58, Asn-60, and Asn-100 each contribute to the tRNA site.

Belongs to the PTH family. As to quaternary structure, monomer.

It localises to the cytoplasm. It carries out the reaction an N-acyl-L-alpha-aminoacyl-tRNA + H2O = an N-acyl-L-amino acid + a tRNA + H(+). Functionally, hydrolyzes ribosome-free peptidyl-tRNAs (with 1 or more amino acids incorporated), which drop off the ribosome during protein synthesis, or as a result of ribosome stalling. Catalyzes the release of premature peptidyl moieties from peptidyl-tRNA molecules trapped in stalled 50S ribosomal subunits, and thus maintains levels of free tRNAs and 50S ribosomes. The chain is Peptidyl-tRNA hydrolase from Fervidobacterium nodosum (strain ATCC 35602 / DSM 5306 / Rt17-B1).